A 233-amino-acid polypeptide reads, in one-letter code: Fibrillarin-like rRNA/tRNA 2'-O-methyltransferase (233 aa).

S-adenosyl-L-methionine is bound by residues 89 to 90, 108 to 109, 133 to 134, and 153 to 156; these read TT, EF, DA, and DIAQ.

Belongs to the methyltransferase superfamily. Fibrillarin family. Interacts with nop5. Component of box C/D small ribonucleoprotein (sRNP) particles that contain rpl7ae, FlpA and nop5, plus a guide RNA.

In terms of biological role, involved in pre-rRNA and tRNA processing. Utilizes the methyl donor S-adenosyl-L-methionine to catalyze the site-specific 2'-hydroxyl methylation of ribose moieties in rRNA and tRNA. Site specificity is provided by a guide RNA that base pairs with the substrate. Methylation occurs at a characteristic distance from the sequence involved in base pairing with the guide RNA. The polypeptide is Fibrillarin-like rRNA/tRNA 2'-O-methyltransferase (Sulfurisphaera tokodaii (strain DSM 16993 / JCM 10545 / NBRC 100140 / 7) (Sulfolobus tokodaii)).